Here is a 460-residue protein sequence, read N- to C-terminus: Cyclin-T1-2 (460 aa).

Disordered stretches follow at residues 1-20 (MDEA…SSVA) and 285-345 (QPIS…QDHS). Over residues 314–324 (SDDHSVHDGSR) the composition is skewed to basic and acidic residues. Positions 332-345 (NSESEAQKNLQDHS) are enriched in polar residues.

This sequence belongs to the cyclin family. Cyclin T subfamily.

This Arabidopsis thaliana (Mouse-ear cress) protein is Cyclin-T1-2 (CYCT1-2).